The following is an 854-amino-acid chain: Envelope glycoprotein gp150 (854 aa).

Over 1 to 783 (MAEGFAANRQ…WIGNIPQYLK (783 aa)) the chain is Extracellular. N-linked (GlcNAc...) asparagine; by host glycans are attached at residues Asn-218, Asn-256, Asn-267, Asn-272, Asn-296, Asn-328, Asn-334, Asn-340, Asn-416, Asn-420, Asn-479, Asn-497, Asn-529, Asn-546, and Asn-549. A fusion peptide region spans residues 614 to 634 (VMLALATVLSMAGAGTGATAI). A coiled-coil region spans residues 641–691 (QQVLATHQEAIEKVTEALKINNLRLVTLEHQVLVIGLKVEAMEKFLYTAFA). The immunosuppression stretch occupies residues 660–678 (INNLRLVTLEHQVLVIGLK). Residues Asn-715, Asn-719, Asn-727, and Asn-735 are each glycosylated (N-linked (GlcNAc...) asparagine; by host). Residues 734–770 (YNQTKDLQQRFYEIIMDIEQNNVQGKKGLQQLQEWED) adopt a coiled-coil conformation. The helical transmembrane segment at 784–804 (GLLGGILGIGLGMLLLILCLP) threads the bilayer. Over 805–854 (TLVDCIRNCIHKILGYTVIAMPEVEEEEIQPQMELRRNGRQCGMSEKEEE) the chain is Cytoplasmic.

In terms of assembly, the mature envelope protein (Env) consists of a trimer of SU-TM heterodimers attached by noncovalent interactions or by a labile interchain disulfide bond. Post-translationally, specific enzymatic cleavages in vivo yield mature proteins. Envelope glycoproteins are synthesized as an inactive precursor that is N-glycosylated and processed likely by host cell furin or by a furin-like protease in the Golgi to yield the mature SU and TM proteins. The cleavage site between SU and TM requires the minimal sequence [KR]-X-[KR]-R.

It is found in the virion membrane. The protein localises to the host cell membrane. Its function is as follows. The surface protein (SU) attaches the virus to the host cell by binding to its receptor. This interaction triggers the refolding of the transmembrane protein (TM) and is thought to activate its fusogenic potential by unmasking its fusion peptide. Fusion occurs at the host cell plasma membrane. Functionally, the transmembrane protein (TM) acts as a class I viral fusion protein. Under the current model, the protein has at least 3 conformational states: pre-fusion native state, pre-hairpin intermediate state, and post-fusion hairpin state. During viral and target cell membrane fusion, the coiled coil regions (heptad repeats) assume a trimer-of-hairpins structure, positioning the fusion peptide in close proximity to the C-terminal region of the ectodomain. The formation of this structure appears to drive apposition and subsequent fusion of viral and target cell membranes. Membranes fusion leads to delivery of the nucleocapsid into the cytoplasm. In Feline immunodeficiency virus (isolate Wo) (FIV), this protein is Envelope glycoprotein gp150 (env).